A 405-amino-acid chain; its full sequence is PP2A regulatory subunit TAP46 (405 aa).

2 disordered regions span residues glutamate 159–glutamate 189 and alanine 352–glycine 405. Over residues threonine 165–valine 174 the composition is skewed to polar residues. 2 stretches are compositionally biased toward acidic residues: residues serine 176–glutamate 189 and glutamate 367–glutamate 377. The segment covering alanine 378–proline 393 has biased composition (basic and acidic residues).

It belongs to the IGBP1/TAP42 family. As to quaternary structure, interacts with the 36 kDa catalytic subunit (subunit C) of PP2A. Interacts with PP2A1 and PP2A2. Interacts with PP2A3, PPX1 and FYPP1. Interacts with FYPP3 and ABI5. Interacts with ATPK1/S6K1 and ATPK2/S6K2. Interacts with TIP41L. In terms of processing, phosphorylated by TOR kinase in vitro. In terms of tissue distribution, ubiquitous. Highly expressed in seed, and particularly in the embryo.

Involved in the positive regulation of the TOR signaling pathway. Acts as a negative regulator of PP2A catalytic activity. Plays a positive role in the ABA-regulated inhibition of germination, probably throught its interaction with ABI5. This is PP2A regulatory subunit TAP46 from Arabidopsis thaliana (Mouse-ear cress).